The sequence spans 1385 residues: Pesticidal crystal protein Cry5Aa (1385 aa).

Disordered stretches follow at residues 768-799 (NITVQSNNPPQPSNNGGGDGGGNGGGDGGQYN) and 1359-1385 (PLPTDDQNSEGNTASSTNSDTSMNNNQ). Gly residues predominate over residues 782–796 (NGGGDGGGNGGGDGG). Residues 1370–1385 (NTASSTNSDTSMNNNQ) show a composition bias toward low complexity.

The protein belongs to the delta endotoxin family.

Endotoxin with nematicidal activity. This is Pesticidal crystal protein Cry5Aa (cry5Aa) from Bacillus thuringiensis subsp. darmstadiensis.